A 145-amino-acid chain; its full sequence is 3-hydroxyacyl-[acyl-carrier-protein] dehydratase FabZ (145 aa).

His49 is an active-site residue.

It belongs to the thioester dehydratase family. FabZ subfamily.

It localises to the cytoplasm. It carries out the reaction a (3R)-hydroxyacyl-[ACP] = a (2E)-enoyl-[ACP] + H2O. Involved in unsaturated fatty acids biosynthesis. Catalyzes the dehydration of short chain beta-hydroxyacyl-ACPs and long chain saturated and unsaturated beta-hydroxyacyl-ACPs. The polypeptide is 3-hydroxyacyl-[acyl-carrier-protein] dehydratase FabZ (Ehrlichia ruminantium (strain Gardel)).